Consider the following 200-residue polypeptide: GTP cyclohydrolase 1 (200 aa).

The Zn(2+) site is built by Cys87, His90, and Cys158.

It belongs to the GTP cyclohydrolase I family. In terms of assembly, toroid-shaped homodecamer, composed of two pentamers of five dimers.

It carries out the reaction GTP + H2O = 7,8-dihydroneopterin 3'-triphosphate + formate + H(+). It participates in cofactor biosynthesis; 7,8-dihydroneopterin triphosphate biosynthesis; 7,8-dihydroneopterin triphosphate from GTP: step 1/1. This Xanthomonas campestris pv. campestris (strain ATCC 33913 / DSM 3586 / NCPPB 528 / LMG 568 / P 25) protein is GTP cyclohydrolase 1.